The primary structure comprises 226 residues: ATP synthase subunit a (226 aa).

Transmembrane regions (helical) follow at residues 20–40, 74–94, 100–120, 162–182, and 187–207; these read LNWFSTFIGLLIIPSTFWLMP, FVSLFSLIMFNNFLGLFPYIF, LTLTLTLAFPLWLSFMLYGWI, LTANMIAGHLLMTLLGNTGPM, and IILSMILITQIALLVLESAVA.

It belongs to the ATPase A chain family. In terms of assembly, F-type ATPases have 2 components, CF(1) - the catalytic core - and CF(0) - the membrane proton channel. CF(1) has five subunits: alpha(3), beta(3), gamma(1), delta(1), epsilon(1). CF(0) has three main subunits: a, b and c.

It is found in the mitochondrion inner membrane. Its function is as follows. Mitochondrial membrane ATP synthase (F(1)F(0) ATP synthase or Complex V) produces ATP from ADP in the presence of a proton gradient across the membrane which is generated by electron transport complexes of the respiratory chain. F-type ATPases consist of two structural domains, F(1) - containing the extramembraneous catalytic core and F(0) - containing the membrane proton channel, linked together by a central stalk and a peripheral stalk. During catalysis, ATP synthesis in the catalytic domain of F(1) is coupled via a rotary mechanism of the central stalk subunits to proton translocation. Key component of the proton channel; it may play a direct role in the translocation of protons across the membrane. This is ATP synthase subunit a (mt:ATPase6) from Aedes albopictus (Asian tiger mosquito).